A 181-amino-acid chain; its full sequence is Isopentenyl-diphosphate Delta-isomerase (181 aa).

Residues His24 and His30 each contribute to the Mn(2+) site. The 141-residue stretch at 28–168 (LLHLAFSVLL…PDTFSVWFPT (141 aa)) folds into the Nudix hydrolase domain. The active site involves Cys68. Residue His70 coordinates Mn(2+). A Mg(2+)-binding site is contributed by Glu88. Mn(2+) contacts are provided by Glu117 and Glu119. Residue Glu119 is part of the active site.

Belongs to the IPP isomerase type 1 family. Mg(2+) serves as cofactor. The cofactor is Mn(2+).

The protein resides in the cytoplasm. The catalysed reaction is isopentenyl diphosphate = dimethylallyl diphosphate. It participates in isoprenoid biosynthesis; dimethylallyl diphosphate biosynthesis; dimethylallyl diphosphate from isopentenyl diphosphate: step 1/1. Its function is as follows. Catalyzes the 1,3-allylic rearrangement of the homoallylic substrate isopentenyl (IPP) to its highly electrophilic allylic isomer, dimethylallyl diphosphate (DMAPP). This is Isopentenyl-diphosphate Delta-isomerase from Aliivibrio fischeri (strain MJ11) (Vibrio fischeri).